The primary structure comprises 887 residues: Autotaxin (887 aa).

Residues M1–G27 form the signal peptide. The propeptide at F28–R35 is removed by furin. N53 is a glycosylation site (N-linked (GlcNAc...) asparagine). SMB domains are found at residues T54–A97 and R98–H142. Cystine bridges form between C58/C75, C62/C93, C73/C86, C79/C85, C102/C119, C107/C137, C117/C130, C123/C129, C148/C194, and C156/C350. Positions R126–D128 match the Cell attachment site motif. The phosphodiesterase stretch occupies residues V144–P501. Zn(2+) is bound by residues D171 and T209. T209 functions as the Nucleophile in the catalytic mechanism. Residues T209, N230, and D311 each coordinate 1-(9Z-octadecenoyl)-sn-glycero-3-phosphate. T209, N230, and D311 together coordinate 1-hexadecanoyl-sn-glycero-3-phosphate. Residues T209, N230, and D311 each coordinate 1-tetradecanoyl-sn-glycerol 3-phosphate. 4 residues coordinate Zn(2+): D311, H315, D358, and H359. Cystine bridges form between C366–C468, C413–C830, C566–C691, C568–C676, and C799–C809. N398 and N410 each carry an N-linked (GlcNAc...) asparagine glycan. Residue H474 coordinates Zn(2+). Residue H474 coordinates 1-(9Z-octadecenoyl)-sn-glycero-3-phosphate. H474 contributes to the 1-hexadecanoyl-sn-glycero-3-phosphate binding site. Residue H474 coordinates 1-tetradecanoyl-sn-glycerol 3-phosphate. N-linked (GlcNAc...) asparagine glycosylation occurs at N524. Basic and acidic residues predominate over residues H586–K607. Residues H586–P615 are disordered. N-linked (GlcNAc...) asparagine glycosylation is present at N610. The segment at L622–I887 is nuclease-like domain. Ca(2+) is bound by residues D764, N766, D768, L770, and D772. An N-linked (GlcNAc...) asparagine glycan is attached at N831. The tract at residues I854 to T875 is required for secretion.

Belongs to the nucleotide pyrophosphatase/phosphodiesterase family. Requires Zn(2+) as cofactor. It depends on Ca(2+) as a cofactor. Post-translationally, N-glycosylation, but not furin-cleavage, plays a critical role on secretion and on lysoPLD activity. The interdomain disulfide bond between Cys-413 and Cys-830 is essential for catalytic activity. In terms of tissue distribution, abundantly expressed in cerebrum and cerebellum. Localized in secretory epithelial cells in the brain and the eye including choroid plexus epithelial cells, ciliary epithelial cells, iris pigment epithelial cells, and retinal pigment cells.

The protein resides in the secreted. It carries out the reaction a 1-O-alkyl-sn-glycero-3-phosphoethanolamine + H2O = a 1-O-alkyl-sn-glycero-3-phosphate + ethanolamine + H(+). The catalysed reaction is a 1-acyl-sn-glycero-3-phosphoethanolamine + H2O = a 1-acyl-sn-glycero-3-phosphate + ethanolamine + H(+). The enzyme catalyses 1-(9Z-octadecenoyl)-sn-glycero-3-phosphoethanolamine + H2O = 1-(9Z-octadecenoyl)-sn-glycero-3-phosphate + ethanolamine + H(+). It catalyses the reaction a 1-O-alkyl-sn-glycero-3-phosphocholine + H2O = a 1-O-alkyl-sn-glycero-3-phosphate + choline + H(+). It carries out the reaction 1-O-(9Z-octadecenyl)-sn-glycero-3-phosphocholine + H2O = 1-O-(9Z-octadecenyl)-sn-glycero-3-phosphate + choline + H(+). The catalysed reaction is 1-O-hexadecyl-sn-glycero-3-phosphocholine + H2O = 1-O-hexadecyl-sn-glycero-3-phosphate + choline + H(+). The enzyme catalyses a 1-O-(1Z-alkenyl)-sn-glycero-3-phosphocholine + H2O = a 1-O-(1Z-alkenyl)-sn-glycero-3-phosphate + choline + H(+). It catalyses the reaction a 1-acyl-sn-glycero-3-phosphocholine + H2O = a 1-acyl-sn-glycero-3-phosphate + choline + H(+). It carries out the reaction 1-dodecanoyl-sn-glycero-3-phosphocholine + H2O = 1-dodecanoyl-sn-glycerol 3-phosphate + choline + H(+). The catalysed reaction is 1-(9Z-octadecenoyl)-sn-glycero-3-phosphocholine + H2O = 1-(9Z-octadecenoyl)-sn-glycero-3-phosphate + choline + H(+). The enzyme catalyses 1-tetradecanoyl-sn-glycero-3-phosphocholine + H2O = 1-tetradecanoyl-sn-glycerol 3-phosphate + choline + H(+). It catalyses the reaction 1-decanoyl-sn-glycero-3-phosphocholine + H2O = 1-decanoyl-sn-glycero-3-phosphate + choline + H(+). It carries out the reaction 1-octadecanoyl-sn-glycero-3-phosphocholine + H2O = 1-octadecanoyl-sn-glycero-3-phosphate + choline + H(+). The catalysed reaction is 1-hexadecanoyl-sn-glycero-3-phosphocholine + H2O = 1-hexadecanoyl-sn-glycero-3-phosphate + choline + H(+). The enzyme catalyses 1-hexanoyl-sn-glycero-3-phosphocholine + H2O = 1-hexanoyl-sn-glycero-3-phosphate + choline + H(+). It catalyses the reaction 1-(9Z,12Z)-octadecadienoyl-sn-glycero-3-phosphocholine + H2O = 1-(9Z,12Z)-octadecadienoyl-sn-glycero-3-phosphate + choline + H(+). It carries out the reaction sphing-4-enine-phosphocholine + H2O = sphing-4-enine 1-phosphate + choline + H(+). The catalysed reaction is 1-(5Z,8Z,11Z,14Z-eicosatetraenoyl)-sn-glycero-3-phosphocholine + H2O = 1-(5Z,8Z,11Z,14Z-eicosatetraenoyl)-sn-glycero-3-phosphate + choline + H(+). The enzyme catalyses a 2-acyl-sn-glycero-3-phosphocholine + H2O = a 2-acyl-sn-glycerol 3-phosphate + choline + H(+). It catalyses the reaction a 1,2-diacyl-sn-glycero-3-phosphocholine + H2O = a 1,2-diacyl-sn-glycero-3-phosphate + choline + H(+). It carries out the reaction 1,2-dioctanoyl-sn-glycero-3-phosphocholine + H2O = 1,2-dioctanoyl-sn-glycero-3-phosphate + choline + H(+). The catalysed reaction is 1,2-didecanoyl-sn-glycero-3-phosphocholine + H2O = 1,2-didecanoyl-sn-glycero-3-phosphate + choline + H(+). The enzyme catalyses a 1-acyl-sn-glycero-3-phospho-L-serine + H2O = a 1-acyl-sn-glycero-3-phosphate + L-serine + H(+). It catalyses the reaction 1-(9Z-octadecenoyl)-sn-glycero-3-phospho-L-serine + H2O = 1-(9Z-octadecenoyl)-sn-glycero-3-phosphate + L-serine + H(+). It carries out the reaction a 2-acyl-sn-glycero-3-phospho-L-serine + H2O = a 2-acyl-sn-glycerol 3-phosphate + L-serine + H(+). Its activity is regulated as follows. Inhibited by vanadate. Inhibited by micromolar levels of bile salts, such as tauroursodeoxycholate. Not inhibited by taurodeoxycholate. Not inhibited by hydroxysterols, such as 7-hydroxycholesterol, testosterone, dexamethasone and prednisolone. Inhibited by EDTA and EGTA. Its function is as follows. Secreted lysophospholipase D that hydrolyzes lysophospholipids to produce the signaling molecule lysophosphatidic acid (LPA) in extracellular fluids. Its major substrate is lysophosphatidylcholine. Can also act on sphingosylphosphorylcholine producing sphingosine-1-phosphate, a modulator of cell motility. Can hydrolyze, in vitro, bis-pNPP, to some extent pNP-TMP, and barely ATP. Involved in several motility-related processes such as angiogenesis and neurite outgrowth. Acts as an angiogenic factor by stimulating migration of smooth muscle cells and microtubule formation. Stimulates migration of melanoma cells, probably via a pertussis toxin-sensitive G protein. May have a role in induction of parturition. Possible involvement in cell proliferation and adipose tissue development. Required for LPA production in activated platelets, cleaves the sn-1 lysophospholipids to generate sn-1 lysophosphatidic acids containing predominantly 18:2 and 20:4 fatty acids. Shows a preference for the sn-1 to the sn-2 isomer of 1-O-alkyl-sn-glycero-3-phosphocholine (lyso-PAF). This chain is Autotaxin, found in Rattus norvegicus (Rat).